The primary structure comprises 270 residues: Urease accessory protein UreD (270 aa).

It belongs to the UreD family. In terms of assembly, ureD, UreF and UreG form a complex that acts as a GTP-hydrolysis-dependent molecular chaperone, activating the urease apoprotein by helping to assemble the nickel containing metallocenter of UreC. The UreE protein probably delivers the nickel.

It is found in the cytoplasm. Its function is as follows. Required for maturation of urease via the functional incorporation of the urease nickel metallocenter. The polypeptide is Urease accessory protein UreD (Beijerinckia indica subsp. indica (strain ATCC 9039 / DSM 1715 / NCIMB 8712)).